A 315-amino-acid chain; its full sequence is Calumenin (315 aa).

Positions 1 to 19 (MDLRQFLMCLSLCTAFALS) are cleaved as a signal peptide. Position 44 is a phosphoserine (Ser44). Tyr47 is modified (phosphotyrosine). The residue at position 65 (Thr65) is a Phosphothreonine. 6 EF-hand domains span residues 68-103 (ESKE…AQKR), 104-139 (WIYE…YVLD), 151-186 (QMMV…EEYD), 188-223 (MKDI…HDGN), 229-264 (WVKT…SDYD), and 265-300 (HAEA…FVGS). Ser69 is modified (phosphoserine). Asp81, Asp83, Asp85, Glu92, Asp117, Asn119, Asp121, and Glu128 together coordinate Ca(2+). Asn131 is a glycosylation site (N-linked (GlcNAc...) asparagine). Asp164 is a Ca(2+) binding site. Lys165 carries the N6-acetyllysine modification. Ca(2+) is bound by residues Asp166, Asp168, Glu175, Asp201, Asn203, Asp205, Glu212, Asp242, Asn244, Asp246, Lys248, and Glu253. Thr254 is subject to Phosphothreonine. Phosphoserine occurs at positions 261 and 277. Ca(2+)-binding residues include Asp278, Asn280, Asp282, Lys284, and Glu289. The Prevents secretion from ER motif lies at 312–315 (HDEF).

The protein belongs to the CREC family. Interacts with GGCX.

It localises to the endoplasmic reticulum membrane. The protein resides in the golgi apparatus. Its subcellular location is the secreted. The protein localises to the melanosome. It is found in the sarcoplasmic reticulum lumen. Functionally, involved in regulation of vitamin K-dependent carboxylation of multiple N-terminal glutamate residues. Seems to inhibit gamma-carboxylase GGCX. Binds 7 calcium ions with a low affinity. This chain is Calumenin (CALU), found in Pongo abelii (Sumatran orangutan).